We begin with the raw amino-acid sequence, 79 residues long: Acyl carrier protein (79 aa).

Positions 2–77 (SDTAERVKKI…DAIDFINQKT (76 aa)) constitute a Carrier domain. At Ser37 the chain carries O-(pantetheine 4'-phosphoryl)serine.

Belongs to the acyl carrier protein (ACP) family. 4'-phosphopantetheine is transferred from CoA to a specific serine of apo-ACP by AcpS. This modification is essential for activity because fatty acids are bound in thioester linkage to the sulfhydryl of the prosthetic group.

It is found in the cytoplasm. The protein operates within lipid metabolism; fatty acid biosynthesis. Carrier of the growing fatty acid chain in fatty acid biosynthesis. The polypeptide is Acyl carrier protein (Rhodospirillum centenum (strain ATCC 51521 / SW)).